The primary structure comprises 154 residues: uncharacterized protein (154 aa).

Disordered regions lie at residues 23-63 and 79-154; these read ERVG…VVLK and IKAA…DENE. The segment covering 43–56 has biased composition (acidic residues); sequence PDEDGDHSDKEDEQ. Ser50 carries the phosphoserine modification. At Lys108 the chain carries N6-acetyllysine. Position 146 is a phosphoserine (Ser146).

This is an uncharacterized protein from Homo sapiens (Human).